Consider the following 210-residue polypeptide: Uracil phosphoribosyltransferase (210 aa).

5-phospho-alpha-D-ribose 1-diphosphate is bound by residues R78, R103, and 130-138 (DPMLATGGS). Residues I193 and 198–200 (GDA) each bind uracil. D199 contacts 5-phospho-alpha-D-ribose 1-diphosphate.

It belongs to the UPRTase family. The cofactor is Mg(2+).

The enzyme catalyses UMP + diphosphate = 5-phospho-alpha-D-ribose 1-diphosphate + uracil. The protein operates within pyrimidine metabolism; UMP biosynthesis via salvage pathway; UMP from uracil: step 1/1. Allosterically activated by GTP. In terms of biological role, catalyzes the conversion of uracil and 5-phospho-alpha-D-ribose 1-diphosphate (PRPP) to UMP and diphosphate. This Laribacter hongkongensis (strain HLHK9) protein is Uracil phosphoribosyltransferase.